We begin with the raw amino-acid sequence, 239 residues long: tRNA (guanine-N(7)-)-methyltransferase (239 aa).

Residues E69, E94, D121, and D144 each coordinate S-adenosyl-L-methionine. D144 is a catalytic residue. Substrate is bound at residue K148. Positions 150 to 155 are interaction with RNA; the sequence is RHNKRR. Substrate is bound by residues D180 and 217–220; that span reads TKFE.

It belongs to the class I-like SAM-binding methyltransferase superfamily. TrmB family. In terms of assembly, monomer.

It carries out the reaction guanosine(46) in tRNA + S-adenosyl-L-methionine = N(7)-methylguanosine(46) in tRNA + S-adenosyl-L-homocysteine. It participates in tRNA modification; N(7)-methylguanine-tRNA biosynthesis. Functionally, catalyzes the formation of N(7)-methylguanine at position 46 (m7G46) in tRNA. The protein is tRNA (guanine-N(7)-)-methyltransferase of Cronobacter sakazakii (strain ATCC BAA-894) (Enterobacter sakazakii).